We begin with the raw amino-acid sequence, 986 residues long: LRR receptor-like serine/threonine-protein kinase ER2 (986 aa).

The first 21 residues, Met1 to Ala21, serve as a signal peptide directing secretion. Residues Asp22–Ala581 lie on the Extracellular side of the membrane. N-linked (GlcNAc...) asparagine glycans are attached at residues Asn64 and Asn73. 20 LRR repeats span residues Ala68 to Asn89, Leu90 to Cys114, Ser116 to Leu138, Lys139 to Gln161, Leu162 to Asn186, Val188 to Leu210, Thr211 to Asn233, Cys234 to Gln259, Ala261 to Leu280, Met281 to Asn304, Thr306 to Met329, Ser330 to Lys352, Thr354 to Cys377, Asn379 to Leu401, Glu402 to Met425, Asn427 to Leu449, Glu450 to Asn472, Leu473 to Gln498, Leu500 to Cys520, and Phe521 to Arg545. 2 N-linked (GlcNAc...) asparagine glycosylation sites follow: Asn220 and Asn233. Asn269, Asn304, and Asn328 each carry an N-linked (GlcNAc...) asparagine glycan. Asn373, Asn391, and Asn408 each carry an N-linked (GlcNAc...) asparagine glycan. Asn456 is a glycosylation site (N-linked (GlcNAc...) asparagine). N-linked (GlcNAc...) asparagine glycosylation is found at Asn509, Asn527, and Asn542. A helical transmembrane segment spans residues Ile582 to Trp602. At Pro603 to Glu986 the chain is on the cytoplasmic side. The Protein kinase domain occupies Leu653–Leu934. ATP contacts are provided by residues Ile659–Val667 and Lys681. Catalysis depends on Asp779, which acts as the Proton acceptor.

It belongs to the protein kinase superfamily. Ser/Thr protein kinase family.

The protein resides in the cell membrane. The catalysed reaction is L-seryl-[protein] + ATP = O-phospho-L-seryl-[protein] + ADP + H(+). It catalyses the reaction L-threonyl-[protein] + ATP = O-phospho-L-threonyl-[protein] + ADP + H(+). Functionally, receptor kinase that may be involved in the regulation of cell proliferation and cell growth. The protein is LRR receptor-like serine/threonine-protein kinase ER2 of Oryza sativa subsp. japonica (Rice).